Consider the following 101-residue polypeptide: Putative protein p25 (101 aa).

The polypeptide is Putative protein p25 (25) (Acyrthosiphon pisum secondary endosymbiont phage 1 (Bacteriophage APSE-1)).